Reading from the N-terminus, the 576-residue chain is Calcium-dependent protein kinase 11 (576 aa).

Gly-2 carries N-myristoyl glycine lipidation. The segment at 27-88 is disordered; sequence PADAAPPALP…ANKAAPKVKR (62 aa). Over residues 41–56 the composition is skewed to low complexity; the sequence is APSDQAPEPVTIPPSE. In terms of domain architecture, Protein kinase spans 113 to 371; the sequence is YTIGKKLGQG…AHEALCHPWV (259 aa). Residues 119–127 and Lys-142 contribute to the ATP site; that span reads LGQGQFGTT. Residue Asp-237 is the Proton acceptor of the active site. The interval 377 to 407 is autoinhibitory domain; that stretch reads APDKPLDSAVLSRLKQFSAMNKLKKMALRVI. EF-hand domains follow at residues 414–449, 450–485, 486–521, and 522–555; these read EEIA…VGAN, LMDS…INKV, EKED…FGIG, and DTRI…GNNA. 20 residues coordinate Ca(2+): Asp-427, Asp-429, Ser-431, His-433, Glu-438, Asp-463, Asp-465, Ser-467, Thr-469, Glu-474, Asp-499, Asp-501, Ser-503, Tyr-505, Glu-510, Asp-533, Asp-535, Asp-537, Arg-539, and Glu-544.

This sequence belongs to the protein kinase superfamily. Ser/Thr protein kinase family. CDPK subfamily.

The protein localises to the membrane. It catalyses the reaction L-seryl-[protein] + ATP = O-phospho-L-seryl-[protein] + ADP + H(+). It carries out the reaction L-threonyl-[protein] + ATP = O-phospho-L-threonyl-[protein] + ADP + H(+). Its activity is regulated as follows. Activated by calcium. Autophosphorylation may play an important role in the regulation of the kinase activity. May play a role in signal transduction pathways that involve calcium as a second messenger. The polypeptide is Calcium-dependent protein kinase 11 (Oryza sativa subsp. japonica (Rice)).